The chain runs to 791 residues: MTRKMPTLVRPTHNGERYEITNPTAMPKAAGFLWNQKMMIQITCRGFATAQFMQPEPAKYAYAPNIEAKTFMQPEPNYYAHHPGRFVYIKDEETGRLFSAPYEPVRAPHDRFVFSAGKTDVFWVIESMGIRVEMTMGLPTHHVAELWTIKVKNLSSRPRKLSVTPYFPIGYMSWMNQSAEWNHNLNGIVASCVTPYQKAADYFKNKYLKDKTYFLCDVPPDSWEASQQAFEGEGGLHNPSALQERNLSGSDARYETPTAAVQYKIALGTGEQQEYRFLFGPAHDEAEIGAMRSKYLSKEGFEQTAADYAAYMARGRGCLHVETPDKDLDNFINNWLPRQVYYHGDVNRLTTDPQTRNYLQDNMGMNYIKPEVSRRAFLTAIAQQEATGAMPDGILLVEGAELKYINQVPHTDHCVWLPVTLEAYLNETGDYSLLKEKVPSANGDKLTVFERFCRAMDWLLKSRDHRGLSYIAQGDWCDPMNMVGYKGKGVSGWLTLATAFSLNIWAKVCDHEGETDLAKRFREGADACNAAANEHLWDGEWFARGITDDNVVFGIKEDKEGRIWLNPQSWSILSGAASPEQIDKMLPQIDSHLNTPYGIQMFGPPYTKMREDVGRVTQKAIGSAENAAVYNHAGIFFIHSLYELGAQQDRAFTLLRQMLPGPTDTDYIQRGQLPIYIPNYYRGAWKECPRTAGRSSQLFNTGTVSWVYRCIIEGLCGLRGDGEGLLIRPQLPSSWNSMKVTREFRGATFNVDIRRGNVKEVTVRNGDKVLPAPHVKDIEPGQTYNLTVTIP.

The active-site Proton donor is Asp-478.

It belongs to the glycosyl hydrolase 94 family. Cellobionic acid phosphorylase subfamily. As to quaternary structure, homodimer.

It catalyses the reaction 4-O-beta-D-glucopyranosyl-D-gluconate + phosphate = D-gluconate + alpha-D-glucose 1-phosphate. The protein operates within glycan metabolism; cellulose degradation. Its function is as follows. Catalyzes the reversible phosphorolysis of cellobionic acid (4-O-beta-D-glucopyranosyl-D-gluconate), a probable step in cellulose degradation. May be part of a metabolic pathway where cellobionic acid is converted into alpha-D-glucose 1-phosphate and D-gluconic acid to enter glycolysis and the pentose phosphate pathway, respectively. Produces 4-O-beta-D-glucopyranosyl-D-glucuronate from alpha-D-glucose 1-phosphate and D-glucuronate with low activity in the synthetic direction. This chain is Cellobionic acid phosphorylase, found in Neurospora crassa (strain ATCC 24698 / 74-OR23-1A / CBS 708.71 / DSM 1257 / FGSC 987).